Consider the following 601-residue polypeptide: Elongation factor 4 (601 aa).

Residues 5-187 (IRKKNFCIIA…AICKHVPSPR (183 aa)) form the tr-type G domain. GTP contacts are provided by residues 17-22 (DHGKST) and 134-137 (NKID).

Belongs to the TRAFAC class translation factor GTPase superfamily. Classic translation factor GTPase family. LepA subfamily.

It is found in the cell inner membrane. The enzyme catalyses GTP + H2O = GDP + phosphate + H(+). Required for accurate and efficient protein synthesis under certain stress conditions. May act as a fidelity factor of the translation reaction, by catalyzing a one-codon backward translocation of tRNAs on improperly translocated ribosomes. Back-translocation proceeds from a post-translocation (POST) complex to a pre-translocation (PRE) complex, thus giving elongation factor G a second chance to translocate the tRNAs correctly. Binds to ribosomes in a GTP-dependent manner. The chain is Elongation factor 4 from Borrelia garinii subsp. bavariensis (strain ATCC BAA-2496 / DSM 23469 / PBi) (Borreliella bavariensis).